The primary structure comprises 59 residues: Large ribosomal subunit protein uL30 (59 aa).

Belongs to the universal ribosomal protein uL30 family. As to quaternary structure, part of the 50S ribosomal subunit.

The polypeptide is Large ribosomal subunit protein uL30 (Listeria innocua serovar 6a (strain ATCC BAA-680 / CLIP 11262)).